The sequence spans 176 residues: 2-C-methyl-D-erythritol 2,4-cyclodiphosphate synthase (176 aa).

Residues Asp23, His25, and His60 each contribute to the a divalent metal cation site. Position 23 to 25 (23 to 25) interacts with 4-CDP-2-C-methyl-D-erythritol 2-phosphate; that stretch reads DSH. 4-CDP-2-C-methyl-D-erythritol 2-phosphate is bound at residue 149–152; the sequence is TSGE.

It belongs to the IspF family. As to quaternary structure, homotrimer. The cofactor is a divalent metal cation.

It catalyses the reaction 4-CDP-2-C-methyl-D-erythritol 2-phosphate = 2-C-methyl-D-erythritol 2,4-cyclic diphosphate + CMP. Its pathway is isoprenoid biosynthesis; isopentenyl diphosphate biosynthesis via DXP pathway; isopentenyl diphosphate from 1-deoxy-D-xylulose 5-phosphate: step 4/6. Functionally, involved in the biosynthesis of isopentenyl diphosphate (IPP) and dimethylallyl diphosphate (DMAPP), two major building blocks of isoprenoid compounds. Catalyzes the conversion of 4-diphosphocytidyl-2-C-methyl-D-erythritol 2-phosphate (CDP-ME2P) to 2-C-methyl-D-erythritol 2,4-cyclodiphosphate (ME-CPP) with a corresponding release of cytidine 5-monophosphate (CMP). This Chlamydia caviae (strain ATCC VR-813 / DSM 19441 / 03DC25 / GPIC) (Chlamydophila caviae) protein is 2-C-methyl-D-erythritol 2,4-cyclodiphosphate synthase.